We begin with the raw amino-acid sequence, 271 residues long: MSGNVQLLNDTLAAAKSEGRAALIAYLPAGFPTVTGGIEAVKAALDGGADVVEVGLPHSDPVLDGPVIQTADDIALRGGVRIADVMRTVREAHEATGKPILVMTYWNPIDRYGVERFTAELAEAGGAGCILPDLPVQESALWREHADKHGLATVFVVAPSSRDARLAEITAVGSGFVYAASLMGVTGTRASVGAQAEDLVRRTRATTDTPVCVGLGVSNAAQAAEVAGFADGVIVGSAFVKRMLDAPDDAAGLEGVRALAADLAKGVRGQA.

Active-site proton acceptor residues include E53 and D64.

This sequence belongs to the TrpA family. As to quaternary structure, tetramer of two alpha and two beta chains.

The enzyme catalyses (1S,2R)-1-C-(indol-3-yl)glycerol 3-phosphate + L-serine = D-glyceraldehyde 3-phosphate + L-tryptophan + H2O. It participates in amino-acid biosynthesis; L-tryptophan biosynthesis; L-tryptophan from chorismate: step 5/5. Its function is as follows. The alpha subunit is responsible for the aldol cleavage of indoleglycerol phosphate to indole and glyceraldehyde 3-phosphate. The protein is Tryptophan synthase alpha chain of Streptomyces coelicolor (strain ATCC BAA-471 / A3(2) / M145).